A 120-amino-acid chain; its full sequence is MKTLFVLISILYAVYCFSSEEDVDSAYLANELEPVEDINSEQYAALEPKEEQERSCADMGQDCKDDCDCCLNIATCNCWFGRYFCSCTFGDYQTCLRKKGKCKRNRPQSCPRSNLNRKKG.

An N-terminal signal peptide occupies residues Met1 to Cys16. A propeptide spanning residues Phe17–Arg54 is cleaved from the precursor. Cystine bridges form between Cys56/Cys70, Cys63/Cys76, Cys69/Cys87, and Cys78/Cys85. One can recognise an Agouti domain in the interval Cys56 to Cys95.

This sequence belongs to the neurotoxin 05 (agouti) family. Post-translationally, contains 6 disulfide bonds. In terms of tissue distribution, expressed by the venom gland.

It localises to the secreted. In Lycosa singoriensis (Wolf spider), this protein is U13-lycotoxin-Ls1a.